Reading from the N-terminus, the 299-residue chain is Probable inactive heme oxygenase 2, chloroplastic (299 aa).

Low complexity predominate over residues 1–15; that stretch reads MASLLRPTPLLSTPR. Disordered regions lie at residues 1-20, 45-70, and 96-126; these read MASL…LTHS, LCRS…KQYP, and DLSE…EETW. A chloroplast-targeting transit peptide spans 1–83; it reads MASLLRPTPL…IGITEEMRFV (83 aa). The segment covering 46–57 has biased composition (polar residues); the sequence is CRSTPTPSQQKA. A compositionally biased stretch (basic residues) spans 58 to 67; sequence SQRKRTRYRK. Residues 105–122 show a composition bias toward acidic residues; the sequence is EKEEEEEEEDDDDDDEVK.

It belongs to the heme oxygenase family. Widely expressed at low levels.

It is found in the plastid. It localises to the chloroplast. In terms of biological role, probable inactive heme oxygenase. Binds protoporphyrin IX, a precursor for both heme and chlorophyll biosynthesis. Plays a minor role in phytochrome assembly and photomorphogenesis. This is Probable inactive heme oxygenase 2, chloroplastic (HO2) from Arabidopsis thaliana (Mouse-ear cress).